Here is a 79-residue protein sequence, read N- to C-terminus: Small ribosomal subunit protein bS16c (79 aa).

This sequence belongs to the bacterial ribosomal protein bS16 family.

Its subcellular location is the plastid. It is found in the chloroplast. This Trieres chinensis (Marine centric diatom) protein is Small ribosomal subunit protein bS16c.